The primary structure comprises 409 residues: Nucleoprotein (409 aa).

Disordered regions lie at residues 1 to 31 (MASG…GSSG), 44 to 84 (LNSP…KGGR), 164 to 196 (RSGR…EDDL), and 238 to 258 (VDQV…DDKM). Positions 15–31 (PVIKLGGPKPPKVGSSG) are enriched in low complexity. An RNA-binding region spans residues 29 to 160 (SSGNVSWFQA…GNFRWDFIPL (132 aa)). In terms of domain architecture, CoV N NTD spans 31–156 (GNVSWFQAIK…GGPDGNFRWD (126 aa)). Residues 70 to 84 (YWRRQARFKPGKGGR) show a composition bias toward basic residues. A compositionally biased stretch (low complexity) spans 166-179 (GRSTAASSAASSRA). Composition is skewed to basic and acidic residues over residues 180–192 (PSRE…RSGS) and 247–258 (KGKEGNFGDDKM). Residues S190 and S192 each carry the phosphoserine; by host modification. Residues 215 to 331 (TKAKADEMAH…QCVDGVGTRP (117 aa)) enclose the CoV N CTD domain. Residues 226-333 (RYCKRTIPPN…VDGVGTRPKD (108 aa)) are dimerization. The cysteines at positions 320 and 323 are disulfide-linked. Positions 326-409 (GVGTRPKDDE…GDSALGENEL (84 aa)) are disordered. Positions 358-367 (QRPKKEKKPK) are enriched in basic residues. Over residues 368 to 384 (KQDDEVDKALTSDEERN) the composition is skewed to basic and acidic residues. Residue T378 is modified to Phosphothreonine; by host. S379 is subject to Phosphoserine; by host.

The protein belongs to the gammacoronavirus nucleocapsid protein family. In terms of assembly, homooligomer. Both monomeric and oligomeric forms interact with RNA. Interacts with protein M. Interacts with NSP3; this interaction serves to tether the genome to the newly translated replicase-transcriptase complex at a very early stage of infection. In terms of processing, ADP-ribosylated. The ADP-ribosylation is retained in the virion during infection. Post-translationally, phosphorylated on serine and threonine residues.

Its subcellular location is the virion. It localises to the host endoplasmic reticulum-Golgi intermediate compartment. The protein resides in the host Golgi apparatus. In terms of biological role, packages the positive strand viral genome RNA into a helical ribonucleocapsid (RNP) and plays a fundamental role during virion assembly through its interactions with the viral genome and membrane protein M. Plays an important role in enhancing the efficiency of subgenomic viral RNA transcription as well as viral replication. The polypeptide is Nucleoprotein (Gallus gallus (Chicken)).